The sequence spans 1706 residues: Bifunctional hemolysin/adenylate cyclase (1706 aa).

The a, catalytic stretch occupies residues 1 to 399 (MQQSHQAGYA…RRPSLGAVER (399 aa)). An ATP-binding site is contributed by 349–356 (AYGVAGKS). Positions 367 to 405 (GVPGGRSKSSPDVLETVPASPGLRRPSLGAVERQDSGYD) are disordered. The b, Ala/Gly-rich stretch occupies residues 400-912 (QDSGYDSLDG…LKHSIKLEVI (513 aa)). The interval 500 to 698 (LSAAVFGLGE…SVVGAPVAVV (199 aa)) is required for interaction with CyaC. 2 N6-palmitoyl lysine lipidation sites follow: Lys860 and Lys983. The segment at 913 to 1656 (GGDGDDVVLA…RDADHRVEAI (744 aa)) is c. 17 Hemolysin-type calcium-binding repeats span residues 1014–1031 (IGGAGNDSITGNAHDNFL), 1032–1049 (AGGAGDDRLDGGAGNDTL), 1050–1067 (VGGEGHNTVVGGAGDDVF), 1155–1172 (WGDDGNDTIHGRGGDDIL), 1173–1190 (RGGLGLDTLYGEDGNDIF), 1279–1296 (MGQGGDDTVRGGDGDDLL), 1297–1314 (FGGDGNDMLYGDAGNDTL), 1315–1332 (YGGLGDDTLEGGAGNDWF), 1335–1352 (TPAREHDVLRGGAGVDTV), 1411–1428 (TGDAQANVLRGAGGADVL), 1429–1446 (AGGEGDDVLLGGDGDDQL), 1447–1464 (SGDAGRDRLYGEAGDDWF), 1468–1484 (AANAGNLLDGGDGNDTV), 1537–1554 (IGDAGANVLNGLAGNDVL), 1555–1572 (SGGAGDDVLLGDEGSDLL), 1573–1590 (SGDAGNDDLFGGQGDDTY), and 1603–1620 (ESGGGHDTIRINAGADQL). Positions 1657–1706 (HAANQAIDPAGIEKLVEAMAQYPDPGAAAAAPPAARVPDTLMQSLAVNWR) are d, Asp/Gly-rich.

This sequence in the N-terminal section; belongs to the adenylyl cyclase class-2 family. It in the C-terminal section; belongs to the RTX prokaryotic toxin family. Post-translationally, released in a processed form. In terms of processing, palmitoylated at Lys-860 and Lys-983 by CyaC. The toxin only becomes active when modified in position Lys-983: palmitoylation is required for efficient membrane insertion and pore formation of the acylated Hemolysin chain.

The protein localises to the secreted. It localises to the host cell membrane. It carries out the reaction ATP = 3',5'-cyclic AMP + diphosphate. Its activity is regulated as follows. Activated by host calmodulin. In terms of biological role, bifunctional adenylate cyclase toxin-hemolysin that plays a crucial role in host colonization. It causes whooping cough by acting on mammalian cells by elevating cAMP-concentration and thus disrupts normal cell function. Adenylate cyclase that is activated by host intracellular calmodulin and catalyzes un-regulated conversion of ATP to cAMP, thereby impairing microbicidal functions of immune effector cells and inducing apoptosis of lung macrophages. Functionally, hemolysin that forms small cation-selective membrane channels, leading to hemolytic activity. The hemolytic activity of CyaA is weak compared with that of the HlyA of E.coli. This Bordetella bronchiseptica (strain ATCC BAA-588 / NCTC 13252 / RB50) (Alcaligenes bronchisepticus) protein is Bifunctional hemolysin/adenylate cyclase (cya).